The sequence spans 325 residues: ATP synthase gamma chain (325 aa).

The protein belongs to the ATPase gamma chain family. F-type ATPases have 2 components, CF(1) - the catalytic core - and CF(0) - the membrane proton channel. CF(1) has five subunits: alpha(3), beta(3), gamma(1), delta(1), epsilon(1). CF(0) has three main subunits: a, b and c.

It is found in the cell membrane. Its function is as follows. Produces ATP from ADP in the presence of a proton gradient across the membrane. The gamma chain is believed to be important in regulating ATPase activity and the flow of protons through the CF(0) complex. This Corynebacterium urealyticum (strain ATCC 43042 / DSM 7109) protein is ATP synthase gamma chain.